A 523-amino-acid chain; its full sequence is Spastin (523 aa).

Over Met-1 to Asn-41 the chain is Cytoplasmic. The segment at residues Ala-42–Ser-58 is an intramembrane region (helical). 3 stretches are compositionally biased toward low complexity: residues Leu-57–Thr-71, Gln-171–Pro-184, and Thr-193–Asn-210. 2 disordered regions span residues Leu-57–Gln-77 and Gly-129–Ile-218. Residues Thr-59–Ile-523 lie on the Cytoplasmic side of the membrane.

The protein belongs to the AAA ATPase family. Spastin subfamily. Homohexamer. The homohexamer is stabilized by ATP-binding. The homohexamer may adopt a ring conformation through which microtubules pass prior to being severed.

Its subcellular location is the membrane. It catalyses the reaction n ATP + n H2O + a microtubule = n ADP + n phosphate + (n+1) alpha/beta tubulin heterodimers.. ATP-dependent microtubule severing protein. Stimulates microtubule minus-end depolymerization and poleward microtubule flux in the mitotic spindle. The chain is Spastin from Naegleria gruberi (Amoeba).